The primary structure comprises 500 residues: Citrate lyase alpha chain (500 aa).

As to quaternary structure, oligomer with a subunit composition of (alpha,beta,gamma)6.

The protein resides in the cytoplasm. The catalysed reaction is citrate = oxaloacetate + acetate. The enzyme catalyses citrate + acetyl-CoA = (3S)-citryl-CoA + acetate. Functionally, represents a citrate:acetyl-ACP transferase. This Haemophilus influenzae (strain ATCC 51907 / DSM 11121 / KW20 / Rd) protein is Citrate lyase alpha chain (citF).